A 226-amino-acid chain; its full sequence is Small ribosomal subunit protein uS3 (226 aa).

Positions 39-109 (IYKFFDKFTR…KLDVNLKVLT (71 aa)) constitute a KH type-2 domain.

The protein belongs to the universal ribosomal protein uS3 family. In terms of assembly, part of the 30S ribosomal subunit. Forms a tight complex with proteins S10 and S14.

Functionally, binds the lower part of the 30S subunit head. Binds mRNA in the 70S ribosome, positioning it for translation. In Mycoplasmopsis synoviae (strain 53) (Mycoplasma synoviae), this protein is Small ribosomal subunit protein uS3.